Here is a 195-residue protein sequence, read N- to C-terminus: dCTP deaminase (195 aa).

Residues 109–114, Asp-127, 135–137, Tyr-170, Lys-177, and Gln-181 each bind dCTP; these read RSSLAR and TLE. The Proton donor/acceptor role is filled by Glu-137.

The protein belongs to the dCTP deaminase family. Homotrimer.

It carries out the reaction dCTP + H2O + H(+) = dUTP + NH4(+). It functions in the pathway pyrimidine metabolism; dUMP biosynthesis; dUMP from dCTP (dUTP route): step 1/2. In terms of biological role, catalyzes the deamination of dCTP to dUTP. In Rhodospirillum rubrum (strain ATCC 11170 / ATH 1.1.1 / DSM 467 / LMG 4362 / NCIMB 8255 / S1), this protein is dCTP deaminase.